Here is an 874-residue protein sequence, read N- to C-terminus: Alanine--tRNA ligase (874 aa).

Residues histidine 562, histidine 566, cysteine 665, and histidine 669 each coordinate Zn(2+).

The protein belongs to the class-II aminoacyl-tRNA synthetase family. Requires Zn(2+) as cofactor.

Its subcellular location is the cytoplasm. It carries out the reaction tRNA(Ala) + L-alanine + ATP = L-alanyl-tRNA(Ala) + AMP + diphosphate. Functionally, catalyzes the attachment of alanine to tRNA(Ala) in a two-step reaction: alanine is first activated by ATP to form Ala-AMP and then transferred to the acceptor end of tRNA(Ala). Also edits incorrectly charged Ser-tRNA(Ala) and Gly-tRNA(Ala) via its editing domain. The chain is Alanine--tRNA ligase from Pseudomonas entomophila (strain L48).